The sequence spans 304 residues: tRNA pseudouridine synthase B (304 aa).

Asp-38 acts as the Nucleophile in catalysis.

Belongs to the pseudouridine synthase TruB family. Type 1 subfamily.

It carries out the reaction uridine(55) in tRNA = pseudouridine(55) in tRNA. Its function is as follows. Responsible for synthesis of pseudouridine from uracil-55 in the psi GC loop of transfer RNAs. The chain is tRNA pseudouridine synthase B from Listeria monocytogenes serovar 1/2a (strain ATCC BAA-679 / EGD-e).